We begin with the raw amino-acid sequence, 497 residues long: MKLALVSAEAYPFSKTGGLGDVVGSLFKEFIKAGIDVTLFLPFYKITRDNFSNSVVNAEIVYGAPIGLNTLFGAVRVAKVSVDSDDNLIIEPSKKGNLFFIEHNNFFDRNELYGTNHGEYLDNAERFVFFSRAVLEICKIMNLNFDVIHCHDWHTALIPLYLKTLYRECSCFEKTKTVLTVHNLGYQGIFPREKLELTGFGQEMFHIDGLEFYGMVNFLKGGLFNADIITTVSPTYAKEILTPDYGAGLDGVLRKRKENLVGIINGIDYKIWNPEEDPFIAKKYGLQNINDKQKNKEDLIALAGINSSLQDPIIAFIGRMVYQKGIDIVVDAMPNLIKNGISFIFEGTGESYYEHKIRELQNSYPSKVFAFIGFDEALAHKIYAGADSLLVPSRYEPCGLSQLIAMRYGTIPICRKTGGLSDTVEDKVTGFLFSEYSSSALTHAISRFIEIYNNKQKFLEMIREAMKRDFSWSNSSKKYIELYRGLIGERERKTGTI.

Residue Lys-15 coordinates ADP-alpha-D-glucose.

The protein belongs to the glycosyltransferase 1 family. Bacterial/plant glycogen synthase subfamily.

The catalysed reaction is [(1-&gt;4)-alpha-D-glucosyl](n) + ADP-alpha-D-glucose = [(1-&gt;4)-alpha-D-glucosyl](n+1) + ADP + H(+). It functions in the pathway glycan biosynthesis; glycogen biosynthesis. Functionally, synthesizes alpha-1,4-glucan chains using ADP-glucose. This chain is Glycogen synthase, found in Thermodesulfovibrio yellowstonii (strain ATCC 51303 / DSM 11347 / YP87).